A 437-amino-acid polypeptide reads, in one-letter code: Protein translocase subunit SecY (437 aa).

The next 10 membrane-spanning stretches (helical) occupy residues 19–39 (LFTLAIIVVYRVGTHIPIPGV), 69–89 (LLQITIFALGIMPYITASIIL), 122–142 (VALAILQGTGLVATARSAPLF), 157–177 (IFTTITMVICMTAGTCVVMWL), 189–209 (GMSILMFISIAATFPSALWAI), 219–239 (WIEFGTVIAVGLIMVALVVFV), 276–296 (VIPVIFASSLLYIPALVAQFA), 316–336 (PIYIVTYFLLIVFFAFFYVAI), 378–398 (GSLYLGLIALVPTMALVGFGA), and 400–420 (QNFPFGGTSILIIVGVGLETV).

This sequence belongs to the SecY/SEC61-alpha family. As to quaternary structure, component of the Sec protein translocase complex. Heterotrimer consisting of SecY, SecE and SecG subunits. The heterotrimers can form oligomers, although 1 heterotrimer is thought to be able to translocate proteins. Interacts with the ribosome. Interacts with SecDF, and other proteins may be involved. Interacts with SecA.

The protein resides in the cell membrane. The central subunit of the protein translocation channel SecYEG. Consists of two halves formed by TMs 1-5 and 6-10. These two domains form a lateral gate at the front which open onto the bilayer between TMs 2 and 7, and are clamped together by SecE at the back. The channel is closed by both a pore ring composed of hydrophobic SecY resides and a short helix (helix 2A) on the extracellular side of the membrane which forms a plug. The plug probably moves laterally to allow the channel to open. The ring and the pore may move independently. The protein is Protein translocase subunit SecY of Streptomyces galbus.